We begin with the raw amino-acid sequence, 353 residues long: Phospho-furanose lactonase (353 aa).

5 residues coordinate Zn(2+): His24, His26, Lys153, His186, and His214. The residue at position 153 (Lys153) is an N6-carboxylysine. Residue 244–245 (KY) participates in substrate binding. Zn(2+) is bound at residue Asp272. Residue 275–278 (RILY) participates in substrate binding.

Belongs to the metallo-dependent hydrolases superfamily. Phosphotriesterase family. Zn(2+) serves as cofactor.

The enzyme catalyses a 1,4-lactone + H2O = a 4-hydroxyacid + H(+). It carries out the reaction D-xylono-1,4-lactone 5-phosphate + H2O = 5-phospho-D-xylonate + H(+). The catalysed reaction is L-arabino-1,4-lactone 5-phosphate + H2O = 5-phospho-L-arabinonate + H(+). Its function is as follows. Catalyzes the hydrolysis of D-xylono-1,4-lactone-5-phosphate and L-arabino-1,4-lactone-5-phosphate. Also able to hydrolyze carboxy 1,4-lactones. The chain is Phospho-furanose lactonase from Mycoplasmopsis synoviae (strain 53) (Mycoplasma synoviae).